The following is a 715-amino-acid chain: Coiled-coil domain-containing protein 13 (715 aa).

Coiled coils occupy residues 16–105 and 134–458; these read KAMQ…KERD and ATKI…NVHY. Positions 20–65 are disordered; the sequence is EMQHKRLQKQMEKKREKELSLKSRADDQEEPLEVSDGLSLLHAGEP. Positions 28–45 are enriched in basic and acidic residues; the sequence is KQMEKKREKELSLKSRAD. S258, S469, and S536 each carry phosphoserine. 2 disordered regions span residues 482–541 and 607–645; these read EDPG…EQKG and LEPGKASASQRAAPRTKTGLPTSNNRHNPTGSEKKDPSF. Residues 554–608 are a coiled coil; it reads QAAEVERDRLTEFVTVLQKRVEESNSKLLESERKLQEERHRTVVLEQHLEKIRLE. Residues 625-637 are compositionally biased toward polar residues; it reads GLPTSNNRHNPTG. Positions 653–683 form a coiled coil; sequence VESQMEELTTRLAIQVEENEMLKAALGSALR.

In terms of assembly, interacts with PCM1, CEP290 and PCNT.

The protein localises to the cytoplasm. Its subcellular location is the cytoskeleton. It is found in the microtubule organizing center. The protein resides in the centrosome. It localises to the centriolar satellite. The protein localises to the cilium basal body. In terms of biological role, required for primary cilia formation and promotes the localization of the ciliopathy protein BBS4 to both centriolar satellites and cilia. The sequence is that of Coiled-coil domain-containing protein 13 from Homo sapiens (Human).